The chain runs to 357 residues: DNA replication and repair protein RecF (357 aa).

ATP is bound at residue 31–38 (GQNGAGKT).

The protein belongs to the RecF family.

It localises to the cytoplasm. In terms of biological role, the RecF protein is involved in DNA metabolism; it is required for DNA replication and normal SOS inducibility. RecF binds preferentially to single-stranded, linear DNA. It also seems to bind ATP. This chain is DNA replication and repair protein RecF, found in Coxiella burnetii (strain RSA 493 / Nine Mile phase I).